The following is a 130-amino-acid chain: DNA-directed RNA polymerase subunit omega (130 aa).

Residues 80–130 (PEPDTVPLIGSAGASVDADDTEVAPERMTEEELLKGLEGLAPPEEQPEEDE) are disordered. Basic and acidic residues predominate over residues 103 to 114 (APERMTEEELLK).

It belongs to the RNA polymerase subunit omega family. The RNAP catalytic core consists of 2 alpha, 1 beta, 1 beta' and 1 omega subunit. When a sigma factor is associated with the core the holoenzyme is formed, which can initiate transcription.

It catalyses the reaction RNA(n) + a ribonucleoside 5'-triphosphate = RNA(n+1) + diphosphate. Promotes RNA polymerase assembly. Latches the N- and C-terminal regions of the beta' subunit thereby facilitating its interaction with the beta and alpha subunits. This is DNA-directed RNA polymerase subunit omega from Rhodopseudomonas palustris (strain BisB18).